Reading from the N-terminus, the 84-residue chain is U4-theraphotoxin-Hhn1n (84 aa).

A signal peptide spans 1–22; that stretch reads MKVTLIAILTCAAVLVLHTTAA. A propeptide spanning residues 23–47 is cleaved from the precursor; that stretch reads EELEESQLMEVGMPDTELAAVDEER. 3 cysteine pairs are disulfide-bonded: C51/C65, C55/C76, and C70/C81.

This sequence belongs to the neurotoxin 12 (Hwtx-2) family. 02 (Hwtx-2) subfamily. In terms of tissue distribution, expressed by the venom gland.

The protein resides in the secreted. In terms of biological role, postsynaptic neurotoxin. The chain is U4-theraphotoxin-Hhn1n from Cyriopagopus hainanus (Chinese bird spider).